The sequence spans 434 residues: Trigger factor (434 aa).

Residues 160–245 form the PPIase FKBP-type domain; sequence DDKVKMNFIG…LTEVQAANLP (86 aa).

Belongs to the FKBP-type PPIase family. Tig subfamily.

It is found in the cytoplasm. The enzyme catalyses [protein]-peptidylproline (omega=180) = [protein]-peptidylproline (omega=0). Involved in protein export. Acts as a chaperone by maintaining the newly synthesized protein in an open conformation. Functions as a peptidyl-prolyl cis-trans isomerase. The chain is Trigger factor from Shewanella frigidimarina (strain NCIMB 400).